Consider the following 284-residue polypeptide: Cytosolic Fe-S cluster assembly factor NUBP2 homolog (284 aa).

27 to 34 (GKGGVGKS) provides a ligand contact to ATP. [4Fe-4S] cluster contacts are provided by Cys-200 and Cys-203.

It belongs to the Mrp/NBP35 ATP-binding proteins family. NUBP2/CFD1 subfamily. In terms of assembly, heterotetramer of 2 NUBP1 and 2 NUBP2 chains. [4Fe-4S] cluster is required as a cofactor.

The protein resides in the cytoplasm. Its function is as follows. Component of the cytosolic iron-sulfur (Fe/S) protein assembly (CIA) machinery. Required for maturation of extramitochondrial Fe-S proteins. The NUBP1-NUBP2 heterotetramer forms a Fe-S scaffold complex, mediating the de novo assembly of an Fe-S cluster and its transfer to target apoproteins. The protein is Cytosolic Fe-S cluster assembly factor NUBP2 homolog of Monosiga brevicollis (Choanoflagellate).